The primary structure comprises 178 residues: Transcription termination/antitermination protein NusG (178 aa).

The 31-residue stretch at 126–156 (VGQQVRVNEGPFADFNGVVEEVNYERNKLRV) folds into the KOW domain.

It belongs to the NusG family.

Participates in transcription elongation, termination and antitermination. The polypeptide is Transcription termination/antitermination protein NusG (Neisseria meningitidis serogroup B (strain ATCC BAA-335 / MC58)).